Reading from the N-terminus, the 220-residue chain is GILT-like protein CBG03282 (220 aa).

An N-terminal signal peptide occupies residues 1-22; that stretch reads MTIIRTLFVYYSFLFILVLCSS. Residue Asn131 is glycosylated (N-linked (GlcNAc...) asparagine).

It belongs to the GILT family.

It is found in the secreted. This chain is GILT-like protein CBG03282, found in Caenorhabditis briggsae.